A 289-amino-acid polypeptide reads, in one-letter code: Enoyl-CoA delta isomerase 1, mitochondrial (289 aa).

The N-terminal 28 residues, 1–28 (MALAAARRLLLHAGSRLGRREAVDGARR), are a transit peptide targeting the mitochondrion. K48 is subject to N6-acetyllysine; alternate. K48 is subject to N6-succinyllysine; alternate. An N6-succinyllysine modification is found at K71. At K76 the chain carries N6-acetyllysine. Substrate-binding positions include 93–97 (AGLDL), G140, and N164. 4 positions are modified to N6-acetyllysine; alternate: K222, K229, K255, and K270. Residues K222, K229, K255, and K270 each carry the N6-succinyllysine; alternate modification. N6-succinyllysine is present on K275. At K283 the chain carries N6-acetyllysine; alternate. K283 bears the N6-succinyllysine; alternate mark.

The protein belongs to the enoyl-CoA hydratase/isomerase family. Homotrimer.

It is found in the mitochondrion matrix. The enzyme catalyses a (3Z)-enoyl-CoA = a 4-saturated (2E)-enoyl-CoA. It catalyses the reaction a (3E)-enoyl-CoA = a 4-saturated (2E)-enoyl-CoA. The catalysed reaction is (3Z)-octenoyl-CoA = (2E)-octenoyl-CoA. It carries out the reaction (2E)-tetradecenoyl-CoA = (3Z)-tetradecenoyl-CoA. The enzyme catalyses (3Z)-dodecenoyl-CoA = (2E)-dodecenoyl-CoA. It catalyses the reaction (3Z)-hexenoyl-CoA = (2E)-hexenoyl-CoA. The catalysed reaction is (3Z)-decenoyl-CoA = (2E)-decenoyl-CoA. It participates in lipid metabolism; fatty acid beta-oxidation. In terms of biological role, key enzyme of fatty acid beta-oxidation. Able to isomerize both 3-cis (3Z) and 3-trans (3E) double bonds into the 2-trans (2E) form in a range of enoyl-CoA species, with a preference for (3Z)-enoyl-CoAs over (3E)-enoyl-CoAs. The catalytic efficiency of this enzyme is not affected by the fatty acyl chain length. The chain is Enoyl-CoA delta isomerase 1, mitochondrial from Mus musculus (Mouse).